A 506-amino-acid polypeptide reads, in one-letter code: Cationic amino acid transporter 8 (506 aa).

N-linked (GlcNAc...) asparagine glycans are attached at residues asparagine 2 and asparagine 5. The chain crosses the membrane as a helical span at residues 38 to 58; that stretch reads FYLLLIIIIYTATSACIYFDW. Asparagine 75 is a glycosylation site (N-linked (GlcNAc...) asparagine). 5 helical membrane passes run 93–113, 116–136, 147–167, 174–194, and 211–231; these read NLYPMTLAIHFTMSVFCGFLY, IGPKFTAIIGQGFNILSWIFL, LIGFIFLGLGADTAFIPILTV, ISTFIMTVIGAAASLSYAVPA, and ICYGYIFIILIPCLLVATFLL. Asparagine 277 is a glycosylation site (N-linked (GlcNAc...) asparagine). Residues 302–322 traverse the membrane as a helical segment; sequence ILLFFKVLLSYPSICIIVYFI. Residues asparagine 325 and asparagine 342 are each glycosylated (N-linked (GlcNAc...) asparagine). The next 4 helical transmembrane spans lie at 344–364, 372–392, 399–419, and 427–447; these read SIINIINILMPISFIPCIIFG, AAIIIIIMNAFSALMHLTALI, LISAFLYMCAASIYTSQIYCF, and VVFGKLLGITSLFGGMFSLFC. Residues asparagine 453 and asparagine 456 are each glycosylated (N-linked (GlcNAc...) asparagine). Residues 466–486 form a helical membrane-spanning segment; it reads TISILLAISFIIMFLPLSILY.

The protein belongs to the SLC43A transporter (TC 2.A.1.44) family.

The protein localises to the cell membrane. Functionally, cationic amino acid transporter which transports L-arginine, L-lysine and, to a lesser extent, L-histidine and ornithine. Plays an essential role in gametogenesis. The protein is Cationic amino acid transporter 8 of Plasmodium berghei (strain Anka).